A 283-amino-acid polypeptide reads, in one-letter code: N-terminal Xaa-Pro-Lys N-methyltransferase 2 (283 aa).

Residues Gly-124, Arg-129, Asp-146, 174–175, and Gln-190 contribute to the S-adenosyl-L-methionine site; that span reads LQ.

It belongs to the methyltransferase superfamily. NTM1 family.

Its subcellular location is the nucleus. It catalyses the reaction N-terminal L-alanyl-L-prolyl-L-lysyl-[protein] + S-adenosyl-L-methionine = N-terminal N-methyl-L-alanyl-L-prolyl-L-lysyl-[protein] + S-adenosyl-L-homocysteine + H(+). It carries out the reaction N-terminal L-prolyl-L-prolyl-L-lysyl-[protein] + S-adenosyl-L-methionine = N-terminal N-methyl-L-prolyl-L-prolyl-L-lysyl-[protein] + S-adenosyl-L-homocysteine + H(+). The catalysed reaction is N-terminal L-seryl-L-prolyl-L-lysyl-[protein] + S-adenosyl-L-methionine = N-terminal N-methyl-L-seryl-L-prolyl-L-lysyl-[protein] + S-adenosyl-L-homocysteine + H(+). Its function is as follows. Alpha N-methyltransferase that methylates the N-terminus of target proteins containing the N-terminal motif [Ala/Pro/Ser]-Pro-Lys when the initiator Met is cleaved. Specifically catalyzes monomethylation of exposed alpha-amino group of Ala or Ser residue in the [Ala/Ser]-Pro-Lys motif and Pro in the Pro-Pro-Lys motif. Predominantly functions as a mono-methyltransferase but is also able to di-/tri-methylate the GPKRIA peptide and di-methylate the PPKRIA peptide (in vitro). May activate NTMT1 by priming its substrates for trimethylation. The chain is N-terminal Xaa-Pro-Lys N-methyltransferase 2 (Ntmt2) from Mus musculus (Mouse).